Reading from the N-terminus, the 362-residue chain is Atypical chemokine receptor 3 (362 aa).

Residues Met-1–Leu-47 are Extracellular-facing. N-linked (GlcNAc...) asparagine glycans are attached at residues Asn-13 and Asn-22. The chain crosses the membrane as a helical span at residues Ser-48–Val-68. At Asn-69–Cys-81 the chain is on the cytoplasmic side. A helical transmembrane segment spans residues Tyr-82–Val-102. Topologically, residues Ser-103 to Lys-118 are extracellular. Cysteines 117 and 196 form a disulfide. The helical transmembrane segment at Ile-119–Ser-139 threads the bilayer. The Cytoplasmic segment spans residues Val-140 to Arg-162. Residues Val-163–Leu-183 form a helical membrane-spanning segment. Over Lys-184–Glu-213 the chain is Extracellular. A helical transmembrane segment spans residues Leu-214–Leu-234. The Cytoplasmic segment spans residues Leu-235–Lys-252. A helical transmembrane segment spans residues Ile-253 to Leu-273. At Leu-274 to Ala-296 the chain is on the extracellular side. A helical transmembrane segment spans residues Leu-297–Asn-319. Residues Arg-320 to Lys-362 are Cytoplasmic-facing. Residues Tyr-324–Lys-362 are C-terminal cytoplasmic tail. Phosphoserine occurs at positions 347, 350, and 355.

The protein belongs to the G-protein coupled receptor 1 family. Atypical chemokine receptor subfamily. As to quaternary structure, homodimer. Can form heterodimers with CXCR4; heterodimerization may regulate CXCR4 signaling activity. Interacts with ARRB1 and ARRB2. In terms of processing, the Ser/Thr residues in the C-terminal cytoplasmic tail may be phosphorylated. Ubiquitinated at the Lys residues in its C-terminal cytoplasmic tail and is essential for correct trafficking from and to the cell membrane. Deubiquitinated by CXCL12-stimulation in a reversible manner. As to expression, not detected in blood, liver, lung and heart, but high expression detected in several tumor cell lines (at protein level). Expressed in heart, spleen, kidney, lung, ovary, brain, testis, astrocytes, neutrophils and B-lymphocytes.

It localises to the cell membrane. The protein resides in the early endosome. It is found in the recycling endosome. Functionally, atypical chemokine receptor that controls chemokine levels and localization via high-affinity chemokine binding that is uncoupled from classic ligand-driven signal transduction cascades, resulting instead in chemokine sequestration, degradation, or transcytosis. Also known as interceptor (internalizing receptor) or chemokine-scavenging receptor or chemokine decoy receptor. Acts as a receptor for chemokines CXCL11 and CXCL12/SDF1. Chemokine binding does not activate G-protein-mediated signal transduction but instead induces beta-arrestin recruitment, leading to ligand internalization and activation of MAPK signaling pathway. Required for regulation of CXCR4 protein levels in migrating interneurons, thereby adapting their chemokine responsiveness. In glioma cells, transduces signals via MEK/ERK pathway, mediating resistance to apoptosis. Promotes cell growth and survival. Not involved in cell migration, adhesion or proliferation of normal hematopoietic progenitors but activated by CXCL11 in malignant hemapoietic cells, leading to phosphorylation of ERK1/2 (MAPK3/MAPK1) and enhanced cell adhesion and migration. Plays a regulatory role in CXCR4-mediated activation of cell surface integrins by CXCL12. Required for heart valve development. Regulates axon guidance in the oculomotor system through the regulation of CXCL12 levels. This is Atypical chemokine receptor 3 from Mus musculus (Mouse).